Reading from the N-terminus, the 296-residue chain is GTPase Era (296 aa).

In terms of domain architecture, Era-type G spans 3 to 170 (KSGFVTIVGR…KELMFKYIPE (168 aa)). The interval 11–18 (GRPNVGKS) is G1. Residue 11–18 (GRPNVGKS) participates in GTP binding. The tract at residues 37–41 (QTTRN) is G2. The G3 stretch occupies residues 58–61 (DTPG). Residues 58–62 (DTPGI) and 120–123 (NKID) contribute to the GTP site. The segment at 120 to 123 (NKID) is G4. Residues 149–151 (ISA) are G5. The 78-residue stretch at 201–278 (LSEEVPHGIA…YIRLWVKVKE (78 aa)) folds into the KH type-2 domain.

The protein belongs to the TRAFAC class TrmE-Era-EngA-EngB-Septin-like GTPase superfamily. Era GTPase family. As to quaternary structure, monomer.

The protein resides in the cytoplasm. Its subcellular location is the cell membrane. In terms of biological role, an essential GTPase that binds both GDP and GTP, with rapid nucleotide exchange. Plays a role in 16S rRNA processing and 30S ribosomal subunit biogenesis and possibly also in cell cycle regulation and energy metabolism. In Clostridium botulinum (strain Kyoto / Type A2), this protein is GTPase Era.